The primary structure comprises 377 residues: Queuine tRNA-ribosyltransferase (377 aa).

The active-site Proton acceptor is the aspartate 89. Substrate contacts are provided by residues 89–93, aspartate 143, glutamine 188, and glycine 215; that span reads DSGGF. Residues 246-252 form an RNA binding region; it reads GVGKPED. Aspartate 265 serves as the catalytic Nucleophile. The tract at residues 270–274 is RNA binding; important for wobble base 34 recognition; it reads TRNAR. The Zn(2+) site is built by cysteine 303, cysteine 305, cysteine 308, and histidine 334.

Belongs to the queuine tRNA-ribosyltransferase family. Homodimer. Within each dimer, one monomer is responsible for RNA recognition and catalysis, while the other monomer binds to the replacement base PreQ1. Zn(2+) serves as cofactor.

It catalyses the reaction 7-aminomethyl-7-carbaguanine + guanosine(34) in tRNA = 7-aminomethyl-7-carbaguanosine(34) in tRNA + guanine. Its pathway is tRNA modification; tRNA-queuosine biosynthesis. In terms of biological role, catalyzes the base-exchange of a guanine (G) residue with the queuine precursor 7-aminomethyl-7-deazaguanine (PreQ1) at position 34 (anticodon wobble position) in tRNAs with GU(N) anticodons (tRNA-Asp, -Asn, -His and -Tyr). Catalysis occurs through a double-displacement mechanism. The nucleophile active site attacks the C1' of nucleotide 34 to detach the guanine base from the RNA, forming a covalent enzyme-RNA intermediate. The proton acceptor active site deprotonates the incoming PreQ1, allowing a nucleophilic attack on the C1' of the ribose to form the product. After dissociation, two additional enzymatic reactions on the tRNA convert PreQ1 to queuine (Q), resulting in the hypermodified nucleoside queuosine (7-(((4,5-cis-dihydroxy-2-cyclopenten-1-yl)amino)methyl)-7-deazaguanosine). The polypeptide is Queuine tRNA-ribosyltransferase (Acinetobacter baumannii (strain AB307-0294)).